Here is a 291-residue protein sequence, read N- to C-terminus: Protease HtpX (291 aa).

The next 2 membrane-spanning stretches (helical) occupy residues 4–24 (ILLF…TLKL) and 36–56 (GSLL…SLFI). Histidine 142 lines the Zn(2+) pocket. Residue glutamate 143 is part of the active site. Histidine 146 provides a ligand contact to Zn(2+). 2 helical membrane-spanning segments follow: residues 150–170 (GDMV…MFFA) and 193–213 (FVAT…IVMW). Glutamate 219 lines the Zn(2+) pocket.

Belongs to the peptidase M48B family. It depends on Zn(2+) as a cofactor.

The protein localises to the cell inner membrane. This is Protease HtpX from Pseudomonas aeruginosa (strain LESB58).